The following is a 188-amino-acid chain: HGPRTase-like protein 1 (188 aa).

This sequence belongs to the purine/pyrimidine phosphoribosyltransferase family. Archaeal HPRT subfamily.

Its function is as follows. May catalyze a purine salvage reaction, the substrate is unknown. This is HGPRTase-like protein 1 from Haloferax volcanii (strain ATCC 29605 / DSM 3757 / JCM 8879 / NBRC 14742 / NCIMB 2012 / VKM B-1768 / DS2) (Halobacterium volcanii).